Consider the following 363-residue polypeptide: Copper-containing nitrite reductase (363 aa).

Residues 1–24 (MSVFRSVLGACVLLGSCASSLALA) form the signal peptide. Plastocyanin-like domains follow at residues 25–193 (GGAE…YDRV) and 194–363 (YTIG…EPKQ). Positions 113, 118, 153, 154, 163, 168, and 324 each coordinate Cu cation.

This sequence belongs to the multicopper oxidase family. In terms of assembly, homotrimer. Cu(2+) serves as cofactor. Cu(+) is required as a cofactor. The cofactor is FAD.

The protein localises to the periplasm. The catalysed reaction is nitric oxide + Fe(III)-[cytochrome c] + H2O = Fe(II)-[cytochrome c] + nitrite + 2 H(+). It functions in the pathway nitrogen metabolism; nitrate reduction (denitrification); dinitrogen from nitrate: step 2/4. In Pseudomonas chlororaphis (Pseudomonas aureofaciens), this protein is Copper-containing nitrite reductase (nirK).